Consider the following 202-residue polypeptide: Syndecan-4 (202 aa).

The N-terminal stretch at 1-22 (MASPRLLALLLLLVGAFNAAAA) is a signal peptide. The Extracellular portion of the chain corresponds to 23 to 152 (ESIRETEVIN…NIFERTEVLS (130 aa)). 2 disordered regions span residues 41–75 (YFSG…GPED) and 87–112 (VPLD…ELEE). O-linked (Xyl...) (glycosaminoglycan) serine glycosylation is present at serine 43. The segment covering 46–63 (LPDDEDVGGPGQEPDDFE) has biased composition (acidic residues). 2 O-linked (Xyl...) (glycosaminoglycan) serine glycosylation sites follow: serine 65 and serine 67. Residues 153–173 (ALIVGGIVGILFAVFLVLLLV) traverse the membrane as a helical segment. The Cytoplasmic segment spans residues 174–202 (YRMKKKDEGSYDLGKKPIYKKAPTNEFYA).

The protein belongs to the syndecan proteoglycan family. Homodimer. Interacts with CDCP1 and SDCBP. Interacts (via its cytoplasmic domain) with GIPC (via its PDZ domain). Interacts (via its cytoplasmic domain) with NUDT16L1. Interacts with DNM2; this interaction is markedly enhanced at focal ahesion site upon induction of focal adhesions and stress-fiber formation. In terms of processing, shedding, cleavage of the extracellular domain to release a soluble form, is enhanced by a number of factors such as heparanase, growth factor receptor action for example by thrombin or EGF. Physiological events such as stress or wound healing can activate the shedding. PMA-mediated shedding is inhibited by TIMP3. O-glycosylated; contains both chondroitin sulfate and heparan sulfate. Ser-43, Ser-65 and Ser-67 can all be modified by either chondroitin sulfate or heparan sulfate, and the protein exists in forms that contain only chondroitin sulfate, only heparan sulfate and both chondroitin sulfate and heparan sulfate.

The protein localises to the membrane. Its subcellular location is the secreted. Its function is as follows. Cell surface proteoglycan which regulates exosome biogenesis in concert with SDCBP and PDCD6IP. In Sus scrofa (Pig), this protein is Syndecan-4.